We begin with the raw amino-acid sequence, 142 residues long: Large ribosomal subunit protein uL13 (142 aa).

Belongs to the universal ribosomal protein uL13 family. Part of the 50S ribosomal subunit.

Functionally, this protein is one of the early assembly proteins of the 50S ribosomal subunit, although it is not seen to bind rRNA by itself. It is important during the early stages of 50S assembly. In Helicobacter hepaticus (strain ATCC 51449 / 3B1), this protein is Large ribosomal subunit protein uL13.